The chain runs to 1422 residues: MSGIKRTIKETDPDYEDVSVALPNKRHKAIENSARDAAVQKIETIIKEQFALEMKNKEHEIEVIDQRLIEARRMMDKLRACIVANYYASAGLLKVSEGSKTCDTMVFNHPAIKKFLESPSRSSSPANQRAETPSANHSESDSLSQHNDFLSDKDNNSNMDIEERLSNNMEQRPSRNTGRDTSRITGSHKTEQRNADLTDETSRLFVKKTIVVGNVSKYIPPDKREENDQSTHKWMVYVRGSRREPSINHFVKKVWFFLHPSYKPNDLVEVREPPFHLTRRGWGEFPVRVQVHFKDSQNKRIDIIHNLKLDRTYTGLQTLGAETVVDVELHRHSLGEDCIYPQSSESDISDAPPSLPLTIPAPVKASSPIKQSHEPVPDTSVEKGFPASTEAERHTPFYALPSSLERTPTKMTTSQKVTFCSHGNSAFQPIASSCKIVPQSQVPNPESPGKSFQPITMSCKIVSGSPISTPSPSPLPRTPTSTPVHVKQGTAGSVINNPYVIMDKQPGQVIGATTPSTGSPTNKISTASQVSQGTGSPVPKIHGSSFVTSTVKQEDSLFASMPPLCPIGSHPKVQSPKPITGGLGAFTKVIIKQEPGEAPHVPATGAASQSPLPQYVTVKGGHMIAVSPQKQVITPGEGIAQSAKVQPSKVVGVPVGSALPSTVKQAVAISGGQILVAKASSSVSKAVGPKQVVTQGVAKAIVSGGGGTIVAQPVQTLTKAQVTAAGPQKSGSQGSVMATLQLPATNLANLANLPPGTKLYLTTNSKNPSGKGKLLLIPQGAILRATNNANLQSGSAASGGSGAGGGGGGGGGGGSGSGGGGSTGGGGGTAGGGTQSTAGPGGISQHLTYTSYILKQTPQGTFLVGQPSPQTSGKQLTTGSVVQGTLGVSTSSAQGQQTLKVISGQKTTLFTQAAHGGQASLMKISDSTLKTVPATSQLSKPGTTMLRVAGGVITTATSPAVALSANGPAQQSEGMAPVSSSTVSSVTKTSGQQQVCVSQATVGTCKAATPTVVSATSLVPTPNPISGKATVSGLLKIHSSQSSPQQAVLTIPSQLKPLSVNTSGGVQTILMPVNKVVQSFSTSKPPAILPVAAPTPVVPSSAPAAVAKVKTEPETPGPSCLSQEGQTAVKTEESSELGNYVIKIDHLETIQQLLTAVVKKIPLITAKSEDASCFSAKSVEQYYGWNIGKRRAAEWQRAMTMRKVLQEILEKNPRFHHLTPLKTKHIAHWCRCHGYTPPDPESLRNDGDSIEDVLTQIDSEPECPSSFSSADNLCRKLEDLQQFQKREPENEEEVDILSLSEPVKINIKKEQEEKQEEVKFYLPPTPGSEFIGDVTQKIGITLQPVALHRNVYASVVEDMILKATEQLVNDILRQALAVGYQTASHNRIPKEITVSNIHQAICNIPFLDFLTNKHMGILNEDQ.

A Glycyl lysine isopeptide (Lys-Gly) (interchain with G-Cter in SUMO2) cross-link involves residue K9. The stretch at 47 to 80 (KEQFALEMKNKEHEIEVIDQRLIEARRMMDKLRA) forms a coiled coil. K113 participates in a covalent cross-link: Glycyl lysine isopeptide (Lys-Gly) (interchain with G-Cter in SUMO2). The disordered stretch occupies residues 117-198 (ESPSRSSSPA…KTEQRNADLT (82 aa)). Phosphoserine is present on residues S118, S120, and S157. The segment covering 119 to 148 (PSRSSSPANQRAETPSANHSESDSLSQHND) has biased composition (polar residues). Basic and acidic residues predominate over residues 149-165 (FLSDKDNNSNMDIEERL). Positions 166-176 (SNNMEQRPSRN) are enriched in polar residues. A compositionally biased stretch (basic and acidic residues) spans 177–198 (TGRDTSRITGSHKTEQRNADLT). K189 participates in a covalent cross-link: Glycyl lysine isopeptide (Lys-Gly) (interchain with G-Cter in SUMO2). Residues 200-345 (ETSRLFVKKT…EDCIYPQSSE (146 aa)) enclose the YEATS domain. Histone H3K27cr binding regions lie at residues 259 to 261 (HPS) and 282 to 284 (WGE). K370 is covalently cross-linked (Glycyl lysine isopeptide (Lys-Gly) (interchain with G-Cter in SUMO2)). At T407 the chain carries Phosphothreonine. S447, S463, S465, S471, and S473 each carry phosphoserine. Residues 465–486 (SPISTPSPSPLPRTPTSTPVHV) are disordered. Phosphothreonine is present on T478. K487 participates in a covalent cross-link: Glycyl lysine isopeptide (Lys-Gly) (interchain with G-Cter in SUMO2). Residues 513–535 (TTPSTGSPTNKISTASQVSQGTG) show a composition bias toward polar residues. Residues 513–540 (TTPSTGSPTNKISTASQVSQGTGSPVPK) form a disordered region. S536 is modified (phosphoserine). K552 participates in a covalent cross-link: Glycyl lysine isopeptide (Lys-Gly) (interchain with G-Cter in SUMO2). Residue S575 is modified to Phosphoserine. K592 is covalently cross-linked (Glycyl lysine isopeptide (Lys-Gly) (interchain with G-Cter in SUMO2)). S627 is subject to Phosphoserine. Residues K649 and K773 each participate in a glycyl lysine isopeptide (Lys-Gly) (interchain with G-Cter in SUMO2) cross-link. The interval 794 to 842 (GSAASGGSGAGGGGGGGGGGGSGSGGGGSTGGGGGTAGGGTQSTAGPGG) is disordered. Gly residues predominate over residues 797 to 842 (ASGGSGAGGGGGGGGGGGSGSGGGGSTGGGGGTAGGGTQSTAGPGG). K923 is covalently cross-linked (Glycyl lysine isopeptide (Lys-Gly) (interchain with G-Cter in SUMO2)). K1110 is covalently cross-linked (Glycyl lysine isopeptide (Lys-Gly) (interchain with G-Cter in SUMO1); alternate). Residue K1110 forms a Glycyl lysine isopeptide (Lys-Gly) (interchain with G-Cter in SUMO2); alternate linkage. K1130 participates in a covalent cross-link: Glycyl lysine isopeptide (Lys-Gly) (interchain with G-Cter in SUMO2). T1219 carries the phosphothreonine modification. Glycyl lysine isopeptide (Lys-Gly) (interchain with G-Cter in SUMO2) cross-links involve residues K1222 and K1285.

In terms of assembly, component of the ADA2A-containing complex (ATAC), composed of KAT14, KAT2A, TADA2L, TADA3L, ZZ3, MBIP, WDR5, YEATS2, SGF29 and DR1.

Its subcellular location is the nucleus. Chromatin reader component of the ATAC complex, a complex with histone acetyltransferase activity on histones H3 and H4. YEATS2 specifically recognizes and binds histone H3 crotonylated at 'Lys-27' (H3K27cr). Crotonylation marks active promoters and enhancers and confers resistance to transcriptional repressors. This Homo sapiens (Human) protein is YEATS domain-containing protein 2.